A 154-amino-acid chain; its full sequence is 6,7-dimethyl-8-ribityllumazine synthase (154 aa).

5-amino-6-(D-ribitylamino)uracil is bound by residues Phe-22, 56–58, and 80–82; these read AFE and AVI. Residue 85–86 coordinates (2S)-2-hydroxy-3-oxobutyl phosphate; it reads AT. The active-site Proton donor is His-88. Phe-113 is a 5-amino-6-(D-ribitylamino)uracil binding site. Arg-127 is a (2S)-2-hydroxy-3-oxobutyl phosphate binding site.

The protein belongs to the DMRL synthase family.

The enzyme catalyses (2S)-2-hydroxy-3-oxobutyl phosphate + 5-amino-6-(D-ribitylamino)uracil = 6,7-dimethyl-8-(1-D-ribityl)lumazine + phosphate + 2 H2O + H(+). The protein operates within cofactor biosynthesis; riboflavin biosynthesis; riboflavin from 2-hydroxy-3-oxobutyl phosphate and 5-amino-6-(D-ribitylamino)uracil: step 1/2. In terms of biological role, catalyzes the formation of 6,7-dimethyl-8-ribityllumazine by condensation of 5-amino-6-(D-ribitylamino)uracil with 3,4-dihydroxy-2-butanone 4-phosphate. This is the penultimate step in the biosynthesis of riboflavin. In Syntrophobacter fumaroxidans (strain DSM 10017 / MPOB), this protein is 6,7-dimethyl-8-ribityllumazine synthase.